The sequence spans 338 residues: Nuclear hormone receptor family member nhr-108 (338 aa).

A DNA-binding region (nuclear receptor) is located at residues 7–82; that stretch reads NQPCMVCGEI…IGMLEKVVAS (76 aa). An NR C4-type zinc finger spans residues 10-30; that stretch reads CMVCGEISYSIRFGAVSCRAC. The NR C4-type; degenerate zinc-finger motif lies at 46–65; the sequence is KRCNGACDLGKYHRKTCQSC. An NR LBD domain is found at 92–338; the sequence is NNQTILSGLE…QCPLYEATNE (247 aa).

Belongs to the nuclear hormone receptor family.

Its subcellular location is the nucleus. Its function is as follows. Orphan nuclear receptor. This Caenorhabditis elegans protein is Nuclear hormone receptor family member nhr-108 (nhr-108).